Here is a 295-residue protein sequence, read N- to C-terminus: MPWIQLKINTSGNVAEQLGDAMIESGAVSVTFQDTHDTPVFEPLPGETRLWGDTDAIALYDAETDMNDVIAMLEQEPLLGVGFKHKIEQLEDKDWEREWMDNFHPMQFGKRLWICPSWRDIPDPTAVNVMLDPGLAFGTGTHPTTALCLQWLDGLDLEGKTIIDFGCGSGILAIAALKLGAARAIGIDIDPQAIQASRDNAQRNGVSERLELYLPKDQPADLSADVVVANILAGPLRELAPLISDLPKAGGHLGLSGVLATQADGVAEAYADKFTLDPVAEREEWCRITGQRRAS.

Residues Thr-145, Gly-166, Asp-188, and Asn-230 each contribute to the S-adenosyl-L-methionine site.

This sequence belongs to the methyltransferase superfamily. PrmA family.

The protein localises to the cytoplasm. The enzyme catalyses L-lysyl-[protein] + 3 S-adenosyl-L-methionine = N(6),N(6),N(6)-trimethyl-L-lysyl-[protein] + 3 S-adenosyl-L-homocysteine + 3 H(+). Its function is as follows. Methylates ribosomal protein L11. The polypeptide is Ribosomal protein L11 methyltransferase (Pectobacterium carotovorum subsp. carotovorum (strain PC1)).